Consider the following 436-residue polypeptide: Trigger factor (436 aa).

Residues 161–255 enclose the PPIase FKBP-type domain; the sequence is DDVAIIDFKT…VKEVREKQLP (95 aa).

It belongs to the FKBP-type PPIase family. Tig subfamily.

Its subcellular location is the cytoplasm. The enzyme catalyses [protein]-peptidylproline (omega=180) = [protein]-peptidylproline (omega=0). Functionally, involved in protein export. Acts as a chaperone by maintaining the newly synthesized protein in an open conformation. Functions as a peptidyl-prolyl cis-trans isomerase. The polypeptide is Trigger factor (Akkermansia muciniphila (strain ATCC BAA-835 / DSM 22959 / JCM 33894 / BCRC 81048 / CCUG 64013 / CIP 107961 / Muc)).